The chain runs to 592 residues: MRRCKNNTDKFSVITMRLLTLLLICTFFFFFSFAYSAESDNETDSVVTREINGTVVESNATSAKPREDSFADMIDRALEKEFPDNDQNEVPDPGSFNNSVADQQAVLETVARVKPKKNETKTKEEKSFFNLDNENGVEDTPRLIDRKDNVFIMSNPKSKYPVLQLDLRLISDLVVVIVSATCGGIAFACAGQPVITGYLLAGSIIGPGGLSFVSEMVQVETVAQFGVIFLLFALGLEFSAAKLRVVRAVAIPGGLLQIFLFMCLSGITASLCGGKLTEGIFVGAFLSMSSTAVVLKFLMERNSISALHGQITVGTLILQDCAVGLLFALLPVLGGTSGVLQGVLSMAKSLAILIAFLGALFVLSRTWVPWFLKLMTSLSSQTNELYQLAAVAFCLLVAWCSDKLGLSLELGSFAAGVMISTTDLAQHTLEQVEPIRNFFAALFLASIGMLIHMHFLWNHVDILLAAVLLVIVIKTVVVAIVVKVFGYNNKTAVLVGMSLAQIGEFAFVLLSRASNLHLIESKLYLLLLGTTALSLVTTPLLFKLIPAVVHLGVLLRWFSPDSSTEIGFKGELYHSESAKRISLMIQGSLHDS.

The N-terminal stretch at methionine 1–tyrosine 35 is a signal peptide. 12 helical membrane-spanning segments follow: residues leucine 169 to cysteine 189, proline 193 to valine 213, threonine 221 to alanine 241, alanine 248 to threonine 268, glycine 279 to methionine 299, valine 313 to leucine 333, valine 343 to leucine 363, leucine 388 to leucine 408, asparagine 437 to tryptophan 457, isoleucine 462 to valine 482, threonine 491 to serine 511, and leucine 535 to leucine 555.

This sequence belongs to the monovalent cation:proton antiporter 2 (CPA2) transporter (TC 2.A.37) family. KEA (TC 2.A.37.1) subfamily. In terms of tissue distribution, expressed in roots, stems, leaves, flowers and silique.

The protein localises to the golgi apparatus membrane. It is found in the golgi apparatus. Its subcellular location is the trans-Golgi network membrane. The protein resides in the prevacuolar compartment membrane. It localises to the endomembrane system. It carries out the reaction K(+)(in) + H(+)(out) = K(+)(out) + H(+)(in). Functionally, electroneutral K(+)/H(+) efflux antiporter involved in K(+) homeostasis and osmotic adjustment. Together with KEA5 and KEA6, promotes growth and development, and facilitates endosomal pH and ions homeostasis, as well as salt tolerance (e.g. K(+), NaCl and LiCl), probably by supporting cell wall biosynthesis during rapid etiolated seedling growth. The polypeptide is K(+) efflux antiporter 4 (Arabidopsis thaliana (Mouse-ear cress)).